A 103-amino-acid polypeptide reads, in one-letter code: Large ribosomal subunit protein uL24 (103 aa).

This sequence belongs to the universal ribosomal protein uL24 family. In terms of assembly, part of the 50S ribosomal subunit.

One of two assembly initiator proteins, it binds directly to the 5'-end of the 23S rRNA, where it nucleates assembly of the 50S subunit. Its function is as follows. One of the proteins that surrounds the polypeptide exit tunnel on the outside of the subunit. The chain is Large ribosomal subunit protein uL24 from Halalkalibacterium halodurans (strain ATCC BAA-125 / DSM 18197 / FERM 7344 / JCM 9153 / C-125) (Bacillus halodurans).